We begin with the raw amino-acid sequence, 956 residues long: Replication factor C subunit 1 (956 aa).

2 stretches are compositionally biased toward basic and acidic residues: residues 1–15 (MSDIRKWFMKAHEKG) and 50–74 (TADRRKTSKYFGKDKTKVKDEKEVE). Disordered regions lie at residues 1–206 (MSDI…TPDC) and 286–332 (KKSL…AKGK). A compositionally biased stretch (gly residues) spans 158–183 (RGRGGRAAPGASTGGRGRGGGRGGFM). 2 stretches are compositionally biased toward basic and acidic residues: residues 186-200 (GERKDPPHKGEKEVP) and 288-298 (SLPERSNKGTE). The BRCT domain maps to 202–292 (GTPDCLAGLT…KPVKKSLPER (91 aa)). 399-406 (SGTPGIGK) provides a ligand contact to ATP. The disordered stretch occupies residues 858–956 (LEPTVDSLRD…GRGSGAKRKR (99 aa)). Residues 866–892 (RDEDGEPLADNEEGNGSDAEEDSEEAT) are compositionally biased toward acidic residues. The segment covering 916–925 (KGAGSSGSRK) has biased composition (low complexity).

Belongs to the activator 1 large subunit family. Heterotetramer of subunits RFC2, RFC3, RFC4 and RFC5 that can form a complex with RFC1. Expressed at high levels in flowers and siliques, and at lower levels in roots, stems and leaves.

It localises to the nucleus. In terms of biological role, plays a role as mediator of transcriptional gene silencing (TGS), DNA replication, DNA repair, hypersensitive response (HR) and telomere length regulation. Is required in meiosis for DNA double-strand break (DSB) repair during meiotic homologous recombination. May participate in the RAD51-mediated recombination intermediate repair process. Is important for lagging strand synthesis. Promotes meiotic recombination via a specific pathway for crossovers (COs) that involves the formation of double Holliday Junction (dHJ) intermediates. This Arabidopsis thaliana (Mouse-ear cress) protein is Replication factor C subunit 1 (RFC1).